Consider the following 367-residue polypeptide: Farnesyl pyrophosphate synthase (367 aa).

Isopentenyl diphosphate contacts are provided by Lys-71, Arg-74, and Gln-110. 2 residues coordinate Mg(2+): Asp-117 and Asp-121. A dimethylallyl diphosphate-binding site is contributed by Arg-126. Arg-127 is an isopentenyl diphosphate binding site. Residues Lys-214, Thr-215, Gln-254, Lys-271, and Lys-280 each contribute to the dimethylallyl diphosphate site.

Belongs to the FPP/GGPP synthase family. Homodimer. Mg(2+) is required as a cofactor.

Its subcellular location is the cytoplasm. It carries out the reaction isopentenyl diphosphate + dimethylallyl diphosphate = (2E)-geranyl diphosphate + diphosphate. The enzyme catalyses isopentenyl diphosphate + (2E)-geranyl diphosphate = (2E,6E)-farnesyl diphosphate + diphosphate. Its pathway is isoprenoid biosynthesis; farnesyl diphosphate biosynthesis; farnesyl diphosphate from geranyl diphosphate and isopentenyl diphosphate: step 1/1. It functions in the pathway isoprenoid biosynthesis; geranyl diphosphate biosynthesis; geranyl diphosphate from dimethylallyl diphosphate and isopentenyl diphosphate: step 1/1. In terms of biological role, catalyzes the sequential condensation of isopentenyl pyrophosphate with the allylic pyrophosphates, dimethylallyl pyrophosphate, and then with the resultant geranylpyrophosphate to the ultimate product farnesyl pyrophosphate. The protein is Farnesyl pyrophosphate synthase (FDPS) of Gallus gallus (Chicken).